Reading from the N-terminus, the 267-residue chain is 4-hydroxy-tetrahydrodipicolinate reductase (267 aa).

NAD(+)-binding positions include 12-17, 100-102, and 126-129; these read GPRGRM, GTT, and APNF. His-156 serves as the catalytic Proton donor/acceptor. Position 157 (His-157) interacts with (S)-2,3,4,5-tetrahydrodipicolinate. Lys-160 (proton donor) is an active-site residue. 166–167 contributes to the (S)-2,3,4,5-tetrahydrodipicolinate binding site; the sequence is GT.

Belongs to the DapB family.

It localises to the cytoplasm. It catalyses the reaction (S)-2,3,4,5-tetrahydrodipicolinate + NAD(+) + H2O = (2S,4S)-4-hydroxy-2,3,4,5-tetrahydrodipicolinate + NADH + H(+). It carries out the reaction (S)-2,3,4,5-tetrahydrodipicolinate + NADP(+) + H2O = (2S,4S)-4-hydroxy-2,3,4,5-tetrahydrodipicolinate + NADPH + H(+). Its pathway is amino-acid biosynthesis; L-lysine biosynthesis via DAP pathway; (S)-tetrahydrodipicolinate from L-aspartate: step 4/4. Its function is as follows. Catalyzes the conversion of 4-hydroxy-tetrahydrodipicolinate (HTPA) to tetrahydrodipicolinate. The sequence is that of 4-hydroxy-tetrahydrodipicolinate reductase from Bacillus subtilis (strain 168).